The sequence spans 1392 residues: Condensin complex subunit 1 (1392 aa).

Positions 1-593 (MSPHNFEFHL…TGSKDSPSVP (593 aa)) are interaction with SMC2 and SMC4. A phosphoserine mark is found at S20 and S575. 3 disordered regions span residues 569 to 602 (EASTQDSHGDTDPGLTGSKDSPSVPEPEGSQSND), 945 to 966 (REEQEHRAKEPKEKTASSETTM), and 1293 to 1392 (FETG…RHRS). Residues 945 to 960 (REEQEHRAKEPKEKTA) are compositionally biased toward basic and acidic residues. Phosphoserine is present on residues S1300, S1305, S1320, and S1323. The residue at position 1329 (T1329) is a Phosphothreonine. Residues 1332–1353 (PRRTKPGRPQTQQRKKSQRKAK) carry the Bipartite nuclear localization signal motif. A compositionally biased stretch (basic residues) spans 1344 to 1353 (QRKKSQRKAK). Phosphoserine is present on residues S1358, S1361, S1362, and S1367. Over residues 1360–1373 (ESSEDELSAEMTEE) the composition is skewed to acidic residues. Phosphothreonine; by CDK1 occurs at positions 1375 and 1380. At S1386 the chain carries Phosphoserine.

The protein belongs to the CND1 (condensin subunit 1) family. In terms of assembly, component of the condensin complex, which contains the SMC2 and SMC4 heterodimer, and three non SMC subunits that probably regulate the complex: NCAPH/BRRN1, NCAPD2/CAPD2 and NCAPG. Interacts with histones H1 and H3. Phosphorylated by CDK1. Its phosphorylation, as well as that of NCAPH and NCAPG subunits, activates the condensin complex and is required for chromosome condensation.

It localises to the nucleus. Its subcellular location is the cytoplasm. The protein resides in the chromosome. Its function is as follows. Regulatory subunit of the condensin complex, a complex required for conversion of interphase chromatin into mitotic-like condense chromosomes. The condensin complex probably introduces positive supercoils into relaxed DNA in the presence of type I topoisomerases and converts nicked DNA into positive knotted forms in the presence of type II topoisomerases. May target the condensin complex to DNA via its C-terminal domain. May promote the resolution of double-strand DNA catenanes (intertwines) between sister chromatids. Condensin-mediated compaction likely increases tension in catenated sister chromatids, providing directionality for type II topoisomerase-mediated strand exchanges toward chromatid decatenation. Required for decatenation of non-centromeric ultrafine DNA bridges during anaphase. Early in neurogenesis, may play an essential role to ensure accurate mitotic chromosome condensation in neuron stem cells, ultimately affecting neuron pool and cortex size. The chain is Condensin complex subunit 1 (Ncapd2) from Mus musculus (Mouse).